The primary structure comprises 84 residues: UPF0153 protein PA1578.1 (84 aa).

This sequence belongs to the UPF0153 family.

This Pseudomonas aeruginosa (strain ATCC 15692 / DSM 22644 / CIP 104116 / JCM 14847 / LMG 12228 / 1C / PRS 101 / PAO1) protein is UPF0153 protein PA1578.1.